A 146-amino-acid polypeptide reads, in one-letter code: Early E3 16 kDa glycoprotein (146 aa).

2 N-linked (GlcNAc...) asparagine; by host glycosylation sites follow: N51 and N84.

Functionally, E3 proteins seem to be dispensable for virus growth in tissue culture cells. They are potentially important for virus growth under special conditions; E3 region may help adenoviruses to evade the immune surveillance of the host. This chain is Early E3 16 kDa glycoprotein, found in Human adenovirus B serotype 3 (HAdV-3).